The sequence spans 70 residues: Chondroitin proteoglycan 9 (70 aa).

The signal sequence occupies residues 1-19 (MNFWHLLLLAVLFFVTVFG). 2 O-linked (Xyl...) (chondroitin sulfate) serine glycosylation sites follow: serine 25 and serine 27.

The protein is Chondroitin proteoglycan 9 (cpg-9) of Caenorhabditis briggsae.